The following is a 146-amino-acid chain: Hemoglobin subunit beta-2 (146 aa).

One can recognise a Globin domain in the interval 2 to 146; sequence GLTAHEKQLI…IADALGKGYH (145 aa). Heme b is bound by residues H63 and H92.

It belongs to the globin family. As to quaternary structure, heterotetramer of two alpha chains and two beta chains. Red blood cells.

Functionally, involved in oxygen transport from the lung to the various peripheral tissues. In Xenopus borealis (Kenyan clawed frog), this protein is Hemoglobin subunit beta-2 (hbb2).